The chain runs to 264 residues: Small ribosomal subunit protein eS1 (264 aa).

The tract at residues 233–264 (GEGGGAGKPAGDETGAKVERADGYEPPVQESV) is disordered. Over residues 242–255 (AGDETGAKVERADG) the composition is skewed to basic and acidic residues.

Belongs to the eukaryotic ribosomal protein eS1 family. Component of the small ribosomal subunit. Mature ribosomes consist of a small (40S) and a large (60S) subunit. The 40S subunit contains about 33 different proteins and 1 molecule of RNA (18S). The 60S subunit contains about 49 different proteins and 3 molecules of RNA (28S, 5.8S and 5S). Part of the small subunit (SSU) processome, composed of more than 70 proteins and the RNA chaperone small nucleolar RNA (snoRNA) U3.

The protein resides in the cytoplasm. It localises to the nucleus. The protein localises to the nucleolus. Functionally, component of the small ribosomal subunit. The ribosome is a large ribonucleoprotein complex responsible for the synthesis of proteins in the cell. Part of the small subunit (SSU) processome, first precursor of the small eukaryotic ribosomal subunit. During the assembly of the SSU processome in the nucleolus, many ribosome biogenesis factors, an RNA chaperone and ribosomal proteins associate with the nascent pre-rRNA and work in concert to generate RNA folding, modifications, rearrangements and cleavage as well as targeted degradation of pre-ribosomal RNA by the RNA exosome. May play a role during erythropoiesis. The sequence is that of Small ribosomal subunit protein eS1 (rps3a) from Xenopus tropicalis (Western clawed frog).